Reading from the N-terminus, the 96-residue chain is Large ribosomal subunit protein eL14 (96 aa).

It belongs to the eukaryotic ribosomal protein eL14 family.

The protein is Large ribosomal subunit protein eL14 of Staphylothermus marinus (strain ATCC 43588 / DSM 3639 / JCM 9404 / F1).